We begin with the raw amino-acid sequence, 263 residues long: Lens fiber major intrinsic protein (263 aa).

At 1–9 the chain is on the cytoplasmic side; the sequence is MWELRSASF. The helical transmembrane segment at 10–29 threads the bilayer; sequence WRAIFAEFFATLFYVFFGLG. Residues 30–41 are Extracellular-facing; it reads ASLRWTPGPLHV. A helical membrane pass occupies residues 42-59; sequence LQVALAFGLALATLVQAV. Residues 60–61 are Cytoplasmic-facing; it reads GH. An intramembrane region (discontinuously helical) is located at residues 62 to 77; that stretch reads ISGAHVNPAVTFAFLV. The NPA 1 signature appears at 68–70; that stretch reads NPA. At 78 to 82 the chain is on the cytoplasmic side; it reads GSQMS. Residues 83–106 traverse the membrane as a helical segment; sequence LLRAFCYMAAQLLGAVAGAAVLYS. The Extracellular portion of the chain corresponds to 107 to 127; it reads VTPPAVRGNLALNTLHPGVSV. Residues 128-148 traverse the membrane as a helical segment; sequence GQATTVEIFLTLQFVLCIFAT. At 149–156 the chain is on the cytoplasmic side; it reads YDERRNGR. A helical membrane pass occupies residues 157–175; it reads LGSVALAVGFSLTLGHLFG. Residues 176–178 are Extracellular-facing; the sequence is MYY. The segment at residues 179–193 is an intramembrane region (discontinuously helical); sequence TGAGMNPARSFAPAI. Residues 184-186 carry the NPA 2 motif; that stretch reads NPA. Over 194–200 the chain is Extracellular; the sequence is LTRNFTN. A helical transmembrane segment spans residues 201-222; the sequence is HWVYWVGPIIGGGLGSLLYDFL. Topologically, residues 223–263 are cytoplasmic; sequence LFPRLKSVSERLSILKGARPSDSNGQPEGTGEPVELKTQAL. An interaction with CALM region spans residues 227–237; sequence LKSVSERLSIL. Serine 235, serine 243, and serine 245 each carry phosphoserine. Residues 240 to 263 form a disordered region; sequence ARPSDSNGQPEGTGEPVELKTQAL. Asparagine 246 is modified (deamidated asparagine).

Belongs to the MIP/aquaporin (TC 1.A.8) family. As to quaternary structure, homotetramer; each monomer provides an independent water pore. Two homotetramers on opposing membranes can dimerize, forming a cell-cell junction. Interacts with CALM; the calcium-calmodulin/CALM complex interacts with the cytoplasmic domains of two aquaporins, leading to channel closure. Interacts with BFSP1 (via C-terminus); prevents calcium-dependent inhibition of the water channel activity. In terms of processing, subject to partial proteolytic cleavage in the eye lens core. Partial proteolysis promotes interactions between tetramers from adjoining membranes. Fatty acylated at Met-1 and Lys-238. The acyl modifications, in decreasing order of ion abundance, are: oleoyl (C18:1) &gt; palmitoyl (C16:0) &gt; stearoyl (C18:0) &gt; eicosenoyl (C20:1) &gt; dihomo-gamma-linolenoyl (C20:3) &gt; palmitoleoyl (C16:1) &gt; eicosadienoyl (C20:2).

The protein resides in the cell membrane. Its subcellular location is the cell junction. The catalysed reaction is H2O(in) = H2O(out). With respect to regulation, the water channel activity is inhibited by calcium through calmodulin/CALM. Aquaporins form homotetrameric transmembrane channels, with each monomer independently mediating water transport across the plasma membrane along its osmotic gradient. Specifically expressed in lens fiber cells, this aquaporin is crucial for maintaining lens water homeostasis and transparency. Beyond water permeability, it also acts as a cell-to-cell adhesion molecule, forming thin junctions between lens fiber cells that are essential for maintaining the ordered structure and transparency of the lens. This chain is Lens fiber major intrinsic protein, found in Canis lupus familiaris (Dog).